Consider the following 724-residue polypeptide: Transcription factor dcp-66 (724 aa).

Composition is skewed to polar residues over residues 1-12 and 56-70; these read MAQVQQVPSSPM and GAST…QLSP. Disordered regions lie at residues 1–23 and 55–129; these read MAQV…GNGL and NGAS…KRRL. Basic and acidic residues predominate over residues 85 to 95; that stretch reads AQEKIKLKDDI. The segment covering 105 to 119 has biased composition (acidic residues); sequence DDDDMEDEELGDEIN. Residues 186–216 are a coiled coil; it reads EEQLRERLNMRREAENQLREEEAKLLVLRKM. Disordered stretches follow at residues 328-361 and 523-590; these read KELS…QITQ and AAPA…QLQQ. Residues 332–358 show a composition bias toward low complexity; the sequence is AAETNASASASPAVQQSQQAQQPQQAQ. Polar residues-rich tracts occupy residues 527 to 541 and 551 to 564; these read TSQT…TVSS and IPSS…TQAV. The segment covering 565-590 has biased composition (low complexity); it reads KTSTPIHSTPKSSSSSAKKTAAQLQQ.

In terms of tissue distribution, expressed at low levels in excretory cell, pharynx, vulva, and posterior neurons in adults. Strongly expressed in the excretory cell and more weakly in the pharynx in larva. Embryonic expression in the excretory cell.

It is found in the nucleus. Transcription factor which binds to the 5'-CCATACATTA-3' motif found in the promoter region of pgp-12 and activates its expression in the excretory cell. This chain is Transcription factor dcp-66, found in Caenorhabditis elegans.